The sequence spans 360 residues: Photosystem II protein D1 (360 aa).

The next 3 helical transmembrane spans lie at 29 to 46 (YIGW…TATS), 118 to 133 (HFLT…EWEL), and 142 to 156 (WISV…AAAA). Chlorophyll a is bound at residue H118. Y126 provides a ligand contact to pheophytin a. [CaMn4O5] cluster is bound by residues D170 and E189. Residues 197 to 218 (FHQLGVAGVFGGSLFSAMHGSL) form a helical membrane-spanning segment. H198 provides a ligand contact to chlorophyll a. Residues H215 and 264–265 (SF) each bind a quinone. H215 is a binding site for Fe cation. A Fe cation-binding site is contributed by H272. A helical transmembrane segment spans residues 274-288 (FLGLWPVVGIWLTAL). Residues H332, E333, D342, and A344 each contribute to the [CaMn4O5] cluster site. The propeptide occupies 345–360 (SGESLPVALTAPAVNG).

Belongs to the reaction center PufL/M/PsbA/D family. As to quaternary structure, PSII is composed of 1 copy each of membrane proteins PsbA, PsbB, PsbC, PsbD, PsbE, PsbF, PsbH, PsbI, PsbJ, PsbK, PsbL, PsbM, PsbT, PsbX, PsbY, PsbZ, Psb30/Ycf12, at least 3 peripheral proteins of the oxygen-evolving complex and a large number of cofactors. It forms dimeric complexes. It depends on The D1/D2 heterodimer binds P680, chlorophylls that are the primary electron donor of PSII, and subsequent electron acceptors. It shares a non-heme iron and each subunit binds pheophytin, quinone, additional chlorophylls, carotenoids and lipids. D1 provides most of the ligands for the Mn4-Ca-O5 cluster of the oxygen-evolving complex (OEC). There is also a Cl(-1) ion associated with D1 and D2, which is required for oxygen evolution. The PSII complex binds additional chlorophylls, carotenoids and specific lipids. as a cofactor. Post-translationally, tyr-161 forms a radical intermediate that is referred to as redox-active TyrZ, YZ or Y-Z. In terms of processing, C-terminally processed by CTPA; processing is essential to allow assembly of the oxygen-evolving complex and thus photosynthetic growth.

The protein localises to the plastid. The protein resides in the chloroplast thylakoid membrane. The enzyme catalyses 2 a plastoquinone + 4 hnu + 2 H2O = 2 a plastoquinol + O2. In terms of biological role, photosystem II (PSII) is a light-driven water:plastoquinone oxidoreductase that uses light energy to abstract electrons from H(2)O, generating O(2) and a proton gradient subsequently used for ATP formation. It consists of a core antenna complex that captures photons, and an electron transfer chain that converts photonic excitation into a charge separation. The D1/D2 (PsbA/PsbD) reaction center heterodimer binds P680, the primary electron donor of PSII as well as several subsequent electron acceptors. The chain is Photosystem II protein D1 from Porphyra purpurea (Red seaweed).